The sequence spans 79 residues: Small ribosomal subunit protein bS18 (79 aa).

The protein belongs to the bacterial ribosomal protein bS18 family. Part of the 30S ribosomal subunit. Forms a tight heterodimer with protein bS6.

Functionally, binds as a heterodimer with protein bS6 to the central domain of the 16S rRNA, where it helps stabilize the platform of the 30S subunit. The sequence is that of Small ribosomal subunit protein bS18 from Streptococcus thermophilus (strain CNRZ 1066).